The following is a 456-amino-acid chain: Sulfoacetaldehyde dehydrogenase (456 aa).

213-218 (GGTAAA) is a binding site for NAD(+). Catalysis depends on residues Glu233 and Cys267.

Belongs to the aldehyde dehydrogenase family. Homotetramer.

The enzyme catalyses sulfoacetaldehyde + NAD(+) + H2O = sulfoacetate + NADH + 2 H(+). In terms of biological role, mediates conversion of 2-sulfoacetaldehyde into sulfoacetate. The enzyme is specific for NAD; NADP is not a substrate. Part of a pathway that can utilize the amino group of taurine as a sole source of nitrogen for growth. The polypeptide is Sulfoacetaldehyde dehydrogenase (safD) (Neptuniibacter caesariensis).